Reading from the N-terminus, the 218-residue chain is Octanoyltransferase (218 aa).

One can recognise a BPL/LPL catalytic domain in the interval 27 to 210 (TGGEDTLYLV…QFLAIFTHPA (184 aa)). Residues 72–79 (RGGNITCH), 139–141 (SIG), and 152–154 (GLA) each bind substrate. C170 (acyl-thioester intermediate) is an active-site residue.

The protein belongs to the LipB family.

Its subcellular location is the cytoplasm. The enzyme catalyses octanoyl-[ACP] + L-lysyl-[protein] = N(6)-octanoyl-L-lysyl-[protein] + holo-[ACP] + H(+). The protein operates within protein modification; protein lipoylation via endogenous pathway; protein N(6)-(lipoyl)lysine from octanoyl-[acyl-carrier-protein]: step 1/2. Catalyzes the transfer of endogenously produced octanoic acid from octanoyl-acyl-carrier-protein onto the lipoyl domains of lipoate-dependent enzymes. Lipoyl-ACP can also act as a substrate although octanoyl-ACP is likely to be the physiological substrate. The protein is Octanoyltransferase of Nitratidesulfovibrio vulgaris (strain ATCC 29579 / DSM 644 / CCUG 34227 / NCIMB 8303 / VKM B-1760 / Hildenborough) (Desulfovibrio vulgaris).